The chain runs to 87 residues: Large ribosomal subunit protein bL31B (87 aa).

It belongs to the bacterial ribosomal protein bL31 family. Type B subfamily. Part of the 50S ribosomal subunit.

In Pseudomonas paraeruginosa (strain DSM 24068 / PA7) (Pseudomonas aeruginosa (strain PA7)), this protein is Large ribosomal subunit protein bL31B.